Consider the following 191-residue polypeptide: Large ribosomal subunit protein uL6 (191 aa).

Belongs to the universal ribosomal protein uL6 family. In terms of assembly, part of the 50S ribosomal subunit.

Functionally, this protein binds to the 23S rRNA, and is important in its secondary structure. It is located near the subunit interface in the base of the L7/L12 stalk, and near the tRNA binding site of the peptidyltransferase center. This Gloeobacter violaceus (strain ATCC 29082 / PCC 7421) protein is Large ribosomal subunit protein uL6.